A 343-amino-acid polypeptide reads, in one-letter code: Protein RecA (343 aa).

Residue 68–75 coordinates ATP; that stretch reads GPESSGKT.

This sequence belongs to the RecA family.

The protein resides in the cytoplasm. In terms of biological role, can catalyze the hydrolysis of ATP in the presence of single-stranded DNA, the ATP-dependent uptake of single-stranded DNA by duplex DNA, and the ATP-dependent hybridization of homologous single-stranded DNAs. It interacts with LexA causing its activation and leading to its autocatalytic cleavage. This is Protein RecA from Syntrophobacter fumaroxidans (strain DSM 10017 / MPOB).